The sequence spans 329 residues: MSIEVRNVSKRFNSFQALNAINLDINSGELVALLGPSGCGKTTLLRIIAGLETPDQGNIVFHGEDVSGHDVRDRNVGFVFQHYALFRHMSVFDNVAFGLRMKPKGERPSESKIAEKVHELLNMVQLDWLSDRYPEQLSGGQRQRIALARALAVEPKVLLLDEPFGALDAKVRKELRRWLARLHEDINLTSVFVTHDQEEAMEVADRIVVMNKGVIEQIGSPGEVYDQPANDFVYHFLGDSNRLALSEGHHVLFRPHEVSLSRHETEGHHAAEVRDIRPLGATTRVTLKVEGQSELIEAEVVKDHDSLTGLARGETLFFRPKVWQKVADI.

One can recognise an ABC transporter domain in the interval 3–237 (IEVRNVSKRF…PANDFVYHFL (235 aa)). 35-42 (GPSGCGKT) is a binding site for ATP.

This sequence belongs to the ABC transporter superfamily. Sulfate/tungstate importer (TC 3.A.1.6) family. In terms of assembly, the complex is composed of two ATP-binding proteins (CysA), two transmembrane proteins (CysT and CysW) and a solute-binding protein (CysP).

The protein localises to the cell inner membrane. It carries out the reaction sulfate(out) + ATP + H2O = sulfate(in) + ADP + phosphate + H(+). It catalyses the reaction thiosulfate(out) + ATP + H2O = thiosulfate(in) + ADP + phosphate + H(+). Functionally, part of the ABC transporter complex CysAWTP involved in sulfate/thiosulfate import. Responsible for energy coupling to the transport system. This Pseudomonas putida (strain ATCC 47054 / DSM 6125 / CFBP 8728 / NCIMB 11950 / KT2440) protein is Sulfate/thiosulfate import ATP-binding protein CysA.